Consider the following 141-residue polypeptide: Cystatin (141 aa).

The first 26 residues, M1–M26, serve as a signal peptide directing secretion. In terms of domain architecture, Cystatin spans G29–W129. A Secondary area of contact motif is present at residues Q73 to G77. Intrachain disulfides connect C91/C107 and C120/C140.

It belongs to the cystatin family. Expressed by the venom gland at an extremely low level (at protein level).

The protein resides in the secreted. Inhibits various C1 cysteine proteases including cathepsin L, papain and cathepsin B. This protein has no toxic activity and its function in the venom is unknown. It may play a role as a housekeeping or regulatory protein. The chain is Cystatin from Oxyuranus microlepidotus (Inland taipan).